The primary structure comprises 134 residues: Protein Turandot E (134 aa).

The signal sequence occupies residues 1-38; it reads MSYTRTIHSSASILKMNSALQISCLLVVLGCLLGSGHC.

It belongs to the Turandot family.

The protein resides in the secreted. Its function is as follows. A humoral factor that may play a role in stress tolerance. This chain is Protein Turandot E, found in Drosophila sechellia (Fruit fly).